A 156-amino-acid chain; its full sequence is Small ribosomal subunit protein uS7 (156 aa).

It belongs to the universal ribosomal protein uS7 family. As to quaternary structure, part of the 30S ribosomal subunit. Contacts proteins S9 and S11.

Its function is as follows. One of the primary rRNA binding proteins, it binds directly to 16S rRNA where it nucleates assembly of the head domain of the 30S subunit. Is located at the subunit interface close to the decoding center, probably blocks exit of the E-site tRNA. The polypeptide is Small ribosomal subunit protein uS7 (Nostoc punctiforme (strain ATCC 29133 / PCC 73102)).